The following is a 593-amino-acid chain: DNA topoisomerase I, mitochondrial (593 aa).

The N-terminal 43 residues, Met-1–Ser-43, are a transit peptide targeting the mitochondrion. 3 interaction with DNA regions span residues Lys-254 to Tyr-255, Arg-317 to Lys-322, and Thr-414 to Lys-416. Residues Ser-261–Phe-593 enclose the Topo IB-type catalytic domain. Catalysis depends on Tyr-551, which acts as the O-(3'-phospho-DNA)-tyrosine intermediate.

This sequence belongs to the type IB topoisomerase family. Ca(2+) serves as cofactor. It depends on Mg(2+) as a cofactor.

Its subcellular location is the mitochondrion. It carries out the reaction ATP-independent breakage of single-stranded DNA, followed by passage and rejoining.. Its function is as follows. Releases the supercoiling and torsional tension of DNA introduced during duplication of mitochondrial DNA by transiently cleaving and rejoining one strand of the DNA duplex. Introduces a single-strand break via transesterification at a target site in duplex DNA. The scissile phosphodiester is attacked by the catalytic tyrosine of the enzyme, resulting in the formation of a DNA-(3'-phosphotyrosyl)-enzyme intermediate and the expulsion of a 5'-OH DNA strand. The free DNA strand then rotates around the intact phosphodiester bond on the opposing strand, thus removing DNA supercoils. Finally, in the religation step, the DNA 5'-OH attacks the covalent intermediate to expel the active-site tyrosine and restore the DNA phosphodiester backbone. In Rattus norvegicus (Rat), this protein is DNA topoisomerase I, mitochondrial (Top1mt).